The following is an 89-amino-acid chain: HssA/B-like protein 14 (89 aa).

It belongs to the hssA/B family.

The polypeptide is HssA/B-like protein 14 (hssl14) (Dictyostelium discoideum (Social amoeba)).